The chain runs to 316 residues: Transaldolase (316 aa).

The active-site Schiff-base intermediate with substrate is Lys-132.

Belongs to the transaldolase family. Type 1 subfamily. In terms of assembly, homodimer.

The protein resides in the cytoplasm. It carries out the reaction D-sedoheptulose 7-phosphate + D-glyceraldehyde 3-phosphate = D-erythrose 4-phosphate + beta-D-fructose 6-phosphate. It participates in carbohydrate degradation; pentose phosphate pathway; D-glyceraldehyde 3-phosphate and beta-D-fructose 6-phosphate from D-ribose 5-phosphate and D-xylulose 5-phosphate (non-oxidative stage): step 2/3. Transaldolase is important for the balance of metabolites in the pentose-phosphate pathway. The sequence is that of Transaldolase from Aliivibrio fischeri (strain MJ11) (Vibrio fischeri).